A 569-amino-acid polypeptide reads, in one-letter code: MGDNTSPISVILVSSGSRGNKLLFRYPFQRSQEHPASQTNKPRSRYAVNNTGEHADDQDGDSRFSDVILATILATKSEMCGQKFELKIDNVRFVGHPTLLQHALGQVSKTDPSPKREAPTMILFNVVFALRANADPSVINCLHNLSRRIATVLQHEERRCQYLTREAKLILALQDEVSAMADANEGPQSPFQHILPKCKLARDLKEAYDSLCTSGVVRLHINSWLEVSFCLPHKIHYAASSLIPPEAIERSLKAIRPYHALLLLSDEKSLLSELPIDCSPALVRVIKTTSAVKNLQQLAQDADLALLQVFQLAAHLVYWGKAVIIYPLCENNVYVMSPNASVCLYSPLAEQFSRQFPSHDLPSVLAKFSLPVSLSEFRSPLAPPAQETQLIQMVVWMLQRRLLIQLHTYVCLMASPSEEEPRLREDDVPFTARVGGRSLSTPNALSFGSPTSSDDMTLTSPSMDNSSAELLPSGDSPLNKRMTENLLASLSEHERAAILNVPAAQNPEDLRMFARLLHYFRGRHHLEEIMYNENTRRSQLLMLFDKFRSVLVVTTHEDPVIAVFQALLT.

Disordered regions lie at residues 27–60 (PFQR…DQDG) and 441–476 (TPNA…SGDS). Polar residues-rich tracts occupy residues 34–52 (HPAS…NNTG) and 441–468 (TPNA…NSSA). Residue S476 is modified to Phosphoserine.

Belongs to the NPR3 family. In terms of assembly, within the GATOR complex, component of the GATOR1 subcomplex, made of DEPDC5, NPRL2 and NPRL3. GATOR1 mediates the strong interaction of the GATOR complex with small GTPases Rag (RagA/RRAGA, RagB/RRAGB, RagC/RRAGC and/or RagD/RRAGD) heterodimers. GATOR1 interacts with GPR155/LYCHOS; interaction takes place in presence of cholesterol and prevents interaction between GATOR1 and KICSTOR.

Its subcellular location is the lysosome membrane. In terms of biological role, as a component of the GATOR1 complex functions as an inhibitor of the amino acid-sensing branch of the mTORC1 pathway. In response to amino acid depletion, the GATOR1 complex has GTPase activating protein (GAP) activity and strongly increases GTP hydrolysis by RagA/RRAGA (or RagB/RRAGB) within heterodimeric Rag complexes, thereby turning them into their inactive GDP-bound form, releasing mTORC1 from lysosomal surface and inhibiting mTORC1 signaling. In the presence of abundant amino acids, the GATOR1 complex is negatively regulated by GATOR2, the other GATOR subcomplex, in this amino acid-sensing branch of the TORC1 pathway. This chain is GATOR1 complex protein NPRL3, found in Mus musculus (Mouse).